A 363-amino-acid chain; its full sequence is MQIRTYKIKDICDIQRGRGITKEYIKNNSGKYPVYSAATTNNGELGFINTYDFAGEYVTWTTNGYAGVVFYRNGKFSASQDCGVLKVRNKEINAQFLAFALSLKTPQFVHNLGSRPKLNRKVVAEISLDFPPLEVQEKIAHFLKSFNELSSQLKAELIKRQKQYAFYSDYLLNPKHSQGEEYKLFKLKDIAKKILVGGEKPSDFQKEKDQVYKYPILSNSRKADDFLGYSKTFRIAEKSITVSARGTIGAVFYRDFSYLPAVSLICFIPKPEFNINFLFHALKATKFHKQGSGTGQLTMAQFKEYQVYIPSLKKQQEIAATLDPLYYIFANSNWGIYKEIELRKKQMQYYQERLFQWIENQKV.

The protein belongs to the type-I restriction system S methylase family. As to quaternary structure, the methyltransferase is composed of M and S polypeptides.

The specificity (S) subunit of a type I methyltransferase (MTase); this subunit dictates DNA sequence specificity. The single R subunit has multiple frameshifts and is probably not expressed. This chain is Putative type I specificity subunit S.MpnORF507P, found in Mycoplasma pneumoniae (strain ATCC 29342 / M129 / Subtype 1) (Mycoplasmoides pneumoniae).